Consider the following 342-residue polypeptide: Dihydroorotase (342 aa).

Positions 13 and 15 each coordinate Zn(2+). Substrate is bound by residues 15-17 and asparagine 41; that span reads HLR. Zn(2+) contacts are provided by lysine 98, histidine 135, and histidine 173. Lysine 98 carries the post-translational modification N6-carboxylysine. Substrate is bound at residue histidine 135. Leucine 218 is a substrate binding site. Residue aspartate 246 coordinates Zn(2+). Aspartate 246 is an active-site residue. Residues histidine 250 and alanine 262 each contribute to the substrate site.

This sequence belongs to the metallo-dependent hydrolases superfamily. DHOase family. Class II DHOase subfamily. As to quaternary structure, homodimer. Zn(2+) serves as cofactor.

It catalyses the reaction (S)-dihydroorotate + H2O = N-carbamoyl-L-aspartate + H(+). It functions in the pathway pyrimidine metabolism; UMP biosynthesis via de novo pathway; (S)-dihydroorotate from bicarbonate: step 3/3. Functionally, catalyzes the reversible cyclization of carbamoyl aspartate to dihydroorotate. The chain is Dihydroorotase from Vibrio parahaemolyticus serotype O3:K6 (strain RIMD 2210633).